The primary structure comprises 467 residues: Glutamate--tRNA ligase (467 aa).

Positions 13–23 (PSPTGFLHLGG) match the 'HIGH' region motif. Residues 118–133 (ARGDKPRYDGTWRPEP) show a composition bias toward basic and acidic residues. The interval 118–141 (ARGDKPRYDGTWRPEPGKTLPAIP) is disordered. Residues 245-249 (KLSKR) carry the 'KMSKS' region motif. Lysine 248 contributes to the ATP binding site.

The protein belongs to the class-I aminoacyl-tRNA synthetase family. Glutamate--tRNA ligase type 1 subfamily. In terms of assembly, monomer.

It localises to the cytoplasm. The enzyme catalyses tRNA(Glu) + L-glutamate + ATP = L-glutamyl-tRNA(Glu) + AMP + diphosphate. Catalyzes the attachment of glutamate to tRNA(Glu) in a two-step reaction: glutamate is first activated by ATP to form Glu-AMP and then transferred to the acceptor end of tRNA(Glu). In Bordetella avium (strain 197N), this protein is Glutamate--tRNA ligase.